Consider the following 185-residue polypeptide: Ribosome-recycling factor (185 aa).

It belongs to the RRF family.

The protein resides in the cytoplasm. Its function is as follows. Responsible for the release of ribosomes from messenger RNA at the termination of protein biosynthesis. May increase the efficiency of translation by recycling ribosomes from one round of translation to another. The polypeptide is Ribosome-recycling factor (Campylobacter jejuni (strain RM1221)).